The chain runs to 481 residues: Cis-aconitate decarboxylase (481 aa).

Residues 462-481 form a disordered region; it reads SPPEVASNSPACNNSITNLS. Residues 467-481 show a composition bias toward polar residues; that stretch reads ASNSPACNNSITNLS.

The protein belongs to the PrpD family. As to quaternary structure, homodimer. As to expression, expressed in LPS-tolerized macrophages (at protein level). Expressed in peripheral blood mononuclear cells (PBMCs), microglia and macrophage cells.

It localises to the mitochondrion. It catalyses the reaction cis-aconitate + H(+) = itaconate + CO2. In terms of biological role, cis-aconitate decarboxylase that catalyzes production of itaconate and is involved in the inhibition of the inflammatory response. Acts as a negative regulator of the Toll-like receptors (TLRs)-mediated inflammatory innate response by stimulating the tumor necrosis factor alpha-induced protein TNFAIP3 expression via reactive oxygen species (ROS) in LPS-tolerized macrophages. Involved in antimicrobial response of innate immune cells; ACOD1-mediated itaconic acid production contributes to the antimicrobial activity of macrophages by generating itaconate, leading to alkylation of proteins, such as TFEB. Involved in antiviral response following infection by flavivirus in neurons: ACOD1-mediated itaconate production inhibits the activity of succinate dehydrogenase, generating a metabolic state in neurons that suppresses replication of viral genomes. Plays a role in the embryo implantation. The chain is Cis-aconitate decarboxylase from Homo sapiens (Human).